Here is a 142-residue protein sequence, read N- to C-terminus: Glutamate-rich protein 2 (142 aa).

Disordered stretches follow at residues 1–55 (MSKN…HAPL) and 104–142 (EKAQ…CEDG). Residues 9-27 (EQEKNNEHCPEDINDKLSE) are compositionally biased toward basic and acidic residues. Residues 28–43 (STDDDGEDTSDEDKEE) show a composition bias toward acidic residues. Positions 44-53 (DSNPNKDTHA) are enriched in basic and acidic residues. Residues 109-142 (LEEDDDESEEDNSESEGESTEDPSEESSDECEDG) show a composition bias toward acidic residues.

In Bos taurus (Bovine), this protein is Glutamate-rich protein 2 (ERICH2).